The chain runs to 444 residues: Probable ribonuclease FAU-1 (444 aa).

Belongs to the FAU-1 family.

Probable RNase involved in rRNA stability through maturation and/or degradation of precursor rRNAs. Binds to RNA in loop regions with AU-rich sequences. This chain is Probable ribonuclease FAU-1, found in Pyrobaculum arsenaticum (strain DSM 13514 / JCM 11321 / PZ6).